Here is a 284-residue protein sequence, read N- to C-terminus: 2-dehydro-3-deoxyphosphooctonate aldolase (284 aa).

The protein belongs to the KdsA family.

It is found in the cytoplasm. The enzyme catalyses D-arabinose 5-phosphate + phosphoenolpyruvate + H2O = 3-deoxy-alpha-D-manno-2-octulosonate-8-phosphate + phosphate. The protein operates within carbohydrate biosynthesis; 3-deoxy-D-manno-octulosonate biosynthesis; 3-deoxy-D-manno-octulosonate from D-ribulose 5-phosphate: step 2/3. It functions in the pathway bacterial outer membrane biogenesis; lipopolysaccharide biosynthesis. This Actinobacillus pleuropneumoniae serotype 7 (strain AP76) protein is 2-dehydro-3-deoxyphosphooctonate aldolase.